Here is a 284-residue protein sequence, read N- to C-terminus: Nitrogenase iron protein 1 (284 aa).

17-24 contacts ATP; that stretch reads GKGGIGKS. Position 105 (Cys105) interacts with [4Fe-4S] cluster. The residue at position 108 (Arg108) is an ADP-ribosylarginine; by dinitrogenase reductase ADP-ribosyltransferase. Cys140 lines the [4Fe-4S] cluster pocket.

Belongs to the NifH/BchL/ChlL family. Homodimer. It depends on [4Fe-4S] cluster as a cofactor. Post-translationally, the reversible ADP-ribosylation of Arg-108 inactivates the nitrogenase reductase and regulates nitrogenase activity.

The enzyme catalyses N2 + 8 reduced [2Fe-2S]-[ferredoxin] + 16 ATP + 16 H2O = H2 + 8 oxidized [2Fe-2S]-[ferredoxin] + 2 NH4(+) + 16 ADP + 16 phosphate + 6 H(+). Its function is as follows. The key enzymatic reactions in nitrogen fixation are catalyzed by the nitrogenase complex, which has 2 components: the iron protein and the molybdenum-iron protein. The sequence is that of Nitrogenase iron protein 1 (nifH1) from Methanothermococcus thermolithotrophicus (Methanococcus thermolithotrophicus).